We begin with the raw amino-acid sequence, 299 residues long: ATP phosphoribosyltransferase (299 aa).

The protein belongs to the ATP phosphoribosyltransferase family. Long subfamily. In terms of assembly, equilibrium between an active dimeric form, an inactive hexameric form and higher aggregates. Interconversion between the various forms is largely reversible and is influenced by the natural substrates and inhibitors of the enzyme. Mg(2+) is required as a cofactor.

The protein localises to the cytoplasm. It carries out the reaction 1-(5-phospho-beta-D-ribosyl)-ATP + diphosphate = 5-phospho-alpha-D-ribose 1-diphosphate + ATP. It functions in the pathway amino-acid biosynthesis; L-histidine biosynthesis; L-histidine from 5-phospho-alpha-D-ribose 1-diphosphate: step 1/9. Its activity is regulated as follows. Feedback inhibited by histidine. Catalyzes the condensation of ATP and 5-phosphoribose 1-diphosphate to form N'-(5'-phosphoribosyl)-ATP (PR-ATP). Has a crucial role in the pathway because the rate of histidine biosynthesis seems to be controlled primarily by regulation of HisG enzymatic activity. The protein is ATP phosphoribosyltransferase of Proteus mirabilis (strain HI4320).